The following is a 290-amino-acid chain: 4-hydroxy-tetrahydrodipicolinate synthase (290 aa).

Thr-48 is a pyruvate binding site. Tyr-137 acts as the Proton donor/acceptor in catalysis. Catalysis depends on Lys-165, which acts as the Schiff-base intermediate with substrate. A pyruvate-binding site is contributed by Ile-206.

Belongs to the DapA family. As to quaternary structure, homotetramer; dimer of dimers.

It is found in the cytoplasm. It carries out the reaction L-aspartate 4-semialdehyde + pyruvate = (2S,4S)-4-hydroxy-2,3,4,5-tetrahydrodipicolinate + H2O + H(+). It participates in amino-acid biosynthesis; L-lysine biosynthesis via DAP pathway; (S)-tetrahydrodipicolinate from L-aspartate: step 3/4. Functionally, catalyzes the condensation of (S)-aspartate-beta-semialdehyde [(S)-ASA] and pyruvate to 4-hydroxy-tetrahydrodipicolinate (HTPA). The chain is 4-hydroxy-tetrahydrodipicolinate synthase from Enterococcus faecalis (strain ATCC 700802 / V583).